We begin with the raw amino-acid sequence, 452 residues long: Putrescine hydroxycinnamoyltransferase (452 aa).

H151 acts as the Proton acceptor in catalysis. Positions 213-234 (PAAGVDGDVGGDHKQQHGHGGE) are disordered. The span at 222–234 (GGDHKQQHGHGGE) shows a compositional bias: basic and acidic residues. The Proton acceptor role is filled by D398.

This sequence belongs to the plant acyltransferase family. In terms of tissue distribution, highly expressed in roots. Expressed at low levels in flowers.

In terms of biological role, hydroxycinnamoyl transferase that catalyzes the transfer of an acyl from p-coumaryol-CoA to putrescine, to produce coumaroyl putrescine. Can use feruloyl-CoA, caffeoyl-CoA and sinapoyl-CoA as acyl donors. Seems to be able to transfer the acyl group from feruloyl-CoA to the acyl acceptors agmatine and spermidine. The chain is Putrescine hydroxycinnamoyltransferase from Oryza sativa subsp. japonica (Rice).